Here is a 505-residue protein sequence, read N- to C-terminus: ATP synthase subunit alpha (505 aa).

An ATP-binding site is contributed by 170 to 177 (GDRQTGKT).

Belongs to the ATPase alpha/beta chains family. F-type ATPases have 2 components, CF(1) - the catalytic core - and CF(0) - the membrane proton channel. CF(1) has five subunits: alpha(3), beta(3), gamma(1), delta(1), epsilon(1). CF(0) has four main subunits: a(1), b(1), b'(1) and c(9-12).

It localises to the cellular thylakoid membrane. It carries out the reaction ATP + H2O + 4 H(+)(in) = ADP + phosphate + 5 H(+)(out). In terms of biological role, produces ATP from ADP in the presence of a proton gradient across the membrane. The alpha chain is a regulatory subunit. The polypeptide is ATP synthase subunit alpha (Trichodesmium erythraeum (strain IMS101)).